We begin with the raw amino-acid sequence, 61 residues long: Probable tautomerase SMU_1087 (61 aa).

Pro2 serves as the catalytic Proton acceptor; via imino nitrogen.

Belongs to the 4-oxalocrotonate tautomerase family.

The polypeptide is Probable tautomerase SMU_1087 (Streptococcus mutans serotype c (strain ATCC 700610 / UA159)).